A 119-amino-acid polypeptide reads, in one-letter code: Integration host factor subunit beta (119 aa).

The tract at residues 91 to 119 (DLVGNDQGDDSSNGSSDPLQSVMDMHAMH) is disordered. The segment covering 94 to 107 (GNDQGDDSSNGSSD) has biased composition (low complexity).

Belongs to the bacterial histone-like protein family. As to quaternary structure, heterodimer of an alpha and a beta chain.

In terms of biological role, this protein is one of the two subunits of integration host factor, a specific DNA-binding protein that functions in genetic recombination as well as in transcriptional and translational control. The chain is Integration host factor subunit beta from Bordetella parapertussis (strain 12822 / ATCC BAA-587 / NCTC 13253).